Consider the following 3303-residue polypeptide: Protein unc-80 homolog (3303 aa).

The span at 1–37 shows a compositional bias: low complexity; it reads MVTNAAGTAATGGATSNTTNNNNLQTNNNSHGANNNN. The interval 1–43 is disordered; it reads MVTNAAGTAATGGATSNTTNNNNLQTNNNSHGANNNNDDFDFD. A helical transmembrane segment spans residues 202–222; that stretch reads LFSVPTITLFVYLFAPIIHHL. Disordered stretches follow at residues 284 to 316, 361 to 422, 491 to 512, 526 to 546, 1036 to 1067, 1443 to 1563, and 1627 to 1671; these read LSAD…VSSP, LQQQ…SESI, LYQG…KDYI, AEEP…KKKR, FRRR…SERN, LHEP…DDTA, and VEPT…KDRI. Residues 361-377 are compositionally biased toward low complexity; the sequence is LQQQQSQSRRGSRQSMN. Composition is skewed to basic and acidic residues over residues 378–391 and 401–422; these read SRDK…KFEF and SMKE…SESI. A compositionally biased stretch (polar residues) spans 495 to 505; sequence PGSNSRDSPGS. Residues 1058 to 1067 show a composition bias toward polar residues; it reads SDSTSSSERN. Positions 1490 to 1499 are enriched in basic residues; it reads FKRRSLKLRR. Over residues 1546 to 1556 the composition is skewed to polar residues; it reads DDQQPESPTDS. Residues 1660-1671 are compositionally biased toward basic and acidic residues; that stretch reads KRKDSLSRKDRI. 3 helical membrane passes run 1969 to 1989, 2018 to 2038, and 2048 to 2068; these read VYEI…ALFL, LPQQ…MFYV, and LVGS…GIMF. Disordered stretches follow at residues 2518-2550, 3003-3158, and 3170-3262; these read NGPY…FEEE, EEKR…FKAQ, and FRHS…YRDN. Positions 3003 to 3018 are enriched in basic and acidic residues; the sequence is EEKRYDRESSEQKKSD. Polar residues-rich tracts occupy residues 3033 to 3053 and 3071 to 3106; these read QRPS…SHSH and PSDT…SQSG. Over residues 3124 to 3134 the composition is skewed to gly residues; that stretch reads SGHGSGGGIGT. Residues 3135–3152 show a composition bias toward low complexity; that stretch reads GAASAVPSHLSHSQSLQQ. Positions 3198–3217 are enriched in basic residues; it reads SRLQRSKAASRKTFRLKRSR. The span at 3226–3239 shows a compositional bias: polar residues; it reads IVTSQEEQAPQAQA. Residues 3246-3257 show a composition bias toward low complexity; sequence SWDSVSQTSSTS.

Belongs to the unc-80 family. In terms of assembly, interacts with unc79 and na. Can interact with unc79 independently of na.

The protein localises to the membrane. In terms of biological role, component of the na (narrow abdomen) sodium channel complex. In the circadian clock neurons it functions with na and unc79 to promote circadian rhythmicity. This Drosophila melanogaster (Fruit fly) protein is Protein unc-80 homolog.